We begin with the raw amino-acid sequence, 406 residues long: DNA repair protein RAD55 (406 aa).

Residue 43–50 participates in ATP binding; it reads GPPGIGKT. Positions 385–406 are disordered; the sequence is DSNDNPLPNAEGKEEIIYDSEG.

It belongs to the RecA family. RAD55 subfamily.

The protein resides in the nucleus. Its function is as follows. Required for radiation resistance and meiotic viability and presumably acts in recombination and recombinational DNA repair pathways. The chain is DNA repair protein RAD55 (RAD55) from Saccharomyces cerevisiae (strain ATCC 204508 / S288c) (Baker's yeast).